The sequence spans 119 residues: Beta-2-microglobulin (119 aa).

A signal peptide spans 1 to 20; that stretch reads MARSVTVIFLVLVSLAVVLA. Positions 25–114 constitute an Ig-like C1-type domain; the sequence is PQIQVYSRHP…VTLKEPKTVT (90 aa). The cysteines at positions 45 and 100 are disulfide-linked.

This sequence belongs to the beta-2-microglobulin family. As to quaternary structure, heterodimer of an alpha chain and a beta chain. Beta-2-microglobulin is the beta-chain of major histocompatibility complex class I molecules. Forms a heterotrimer with MR1 and a metabolite antigen.

It localises to the secreted. Functionally, component of the class I major histocompatibility complex (MHC). Involved in the presentation of peptide antigens to the immune system. The chain is Beta-2-microglobulin (B2m) from Rattus norvegicus (Rat).